The chain runs to 242 residues: Argininosuccinate synthase (242 aa).

It belongs to the argininosuccinate synthase family. Type 2 subfamily. Homotetramer.

It localises to the cytoplasm. The enzyme catalyses L-citrulline + L-aspartate + ATP = 2-(N(omega)-L-arginino)succinate + AMP + diphosphate + H(+). The protein operates within amino-acid biosynthesis; L-arginine biosynthesis; L-arginine from L-ornithine and carbamoyl phosphate: step 2/3. The polypeptide is Argininosuccinate synthase (argG) (Dickeya chrysanthemi (Pectobacterium chrysanthemi)).